Here is a 664-residue protein sequence, read N- to C-terminus: MFVNQRTRRPYMSVFVLVLGAAVICPAYGIIDRLVVQTSSGPIRGRSTMVQGREVHVFNGVPFAKPPVDSLRFKKPVPAEPWHGVLDATRLPPSCIQERYEYFPGFAGEEMWNPNTNVSEDCLYLNIWVPTKTRLRHGRGLNFGSNDYFQDDDDFQRQHQSKGGLAMLVWIYGGGFMSGTSTLDIYNAEILAAVGNVIVASMQYRVGAFGFLYLAPYINGYEEDAPGNMGMWDQALAIRWLKENAKAFGGDPDLITLFGESAGGSSVSLHLLSPVTRGLSKRGILQSGTLNAPWSHMTAEKALQIAEGLIDDCNCNLTMLKESPSTVMQCMRNVDAKTISVQQWNSYSGILGFPSAPTIDGVFMTADPMTMLREANLEGIDILVGSNRDEGTYFLLYDFIDYFEKDAATSLPRDKFLEIMNTIFNKASEPEREAIIFQYTGWESGNDGYQNQHQVGRAVGDHFFICPTNEFALGLTERGASVHYYYFTHRTSTSLWGEWMGVLHGDEVEYIFGQPMNASLQYRQRERDLSRRMVLSVSEFARTGNPALEGEHWPLYTRENPIFFIFNAEGEDDLRGEKYGRGPMATSCAFWNDFLPRLRAWSVPSKSPCNLLEQMSIASVSSTMPIVVMVVLVLIPLCAWWWAIKKNKTPPHPQVILETRAFMH.

The N-terminal stretch at 1-29 (MFVNQRTRRPYMSVFVLVLGAAVICPAYG) is a signal peptide. The cysteines at positions 95 and 122 are disulfide-linked. A glycan (N-linked (GlcNAc...) asparagine) is linked at Asn-117. The active-site Acyl-ester intermediate is Ser-261. An intrachain disulfide couples Cys-315 to Cys-330. Asn-316 carries N-linked (GlcNAc...) asparagine glycosylation. Residues Glu-390 and His-504 each act as charge relay system in the active site. Cys-466 and Cys-588 are oxidised to a cystine. An N-linked (GlcNAc...) asparagine glycan is attached at Asn-517. The GPI-anchor amidated asparagine moiety is linked to residue Asn-647. Positions 648–664 (KTPPHPQVILETRAFMH) are cleaved as a propeptide — removed in mature form.

Belongs to the type-B carboxylesterase/lipase family. Homodimer; disulfide-linked.

The protein resides in the synapse. The protein localises to the cell membrane. It carries out the reaction acetylcholine + H2O = choline + acetate + H(+). Its function is as follows. Rapidly hydrolyzes choline released into the synapse. It can hydrolyze butyrylthiocholine. This chain is Acetylcholinesterase, found in Anopheles stephensi (Indo-Pakistan malaria mosquito).